The chain runs to 541 residues: uncharacterized protein (541 aa).

Positions 1 to 55 form a signal peptide, tat-type signal; it reads MTKTVTRAGGASGPQQFQSGGETMKYEITRRRFLAASSAVLAAPAIVTMVRPARA. The disordered stretch occupies residues 339 to 362; it reads RRSPSGISSPRSNRQPKAEALSAR. A compositionally biased stretch (low complexity) spans 341 to 351; it reads SPSGISSPRSN. Transmembrane regions (helical) follow at residues 379–399, 420–440, 466–486, and 500–520; these read AIVW…MVFM, LPVL…AHSG, LVSA…GEIA, and VGYF…LAVA.

This sequence belongs to the bacterial solute-binding protein 7 family. Predicted to be exported by the Tat system. The position of the signal peptide cleavage has not been experimentally proven.

The protein resides in the cell membrane. This is an uncharacterized protein from Sinorhizobium fredii (strain NBRC 101917 / NGR234).